The sequence spans 388 residues: Probable proton-coupled zinc antiporter SLC30A3 (388 aa).

A disordered region spans residues 1 to 46; sequence MEPSPAAGGLETTRLVSPRDRGGAGGSLRLKSLFTEPSEPLPEESK. The Cytoplasmic segment spans residues 1–75; it reads MEPSPAAGGL…TPERLHARRQ (75 aa). The helical transmembrane segment at 76-96 threads the bilayer; it reads LYAACAVCFVFMAGEVVGGYL. The Lumenal portion of the chain corresponds to 97-105; that stretch reads AHSLAIMTD. The helical transmembrane segment at 106-126 threads the bilayer; that stretch reads AAHLLADVGSMMGSLFSLWLS. The Zn(2+) site is built by histidine 108 and aspartate 112. At 127–145 the chain is on the cytoplasmic side; sequence TRPATRTMTFGWHRSETLG. A helical transmembrane segment spans residues 146 to 166; that stretch reads ALASVVSLWMVTGILLYLAFV. The Lumenal segment spans residues 167–177; that stretch reads RLLHSDYHIEG. Residues 178–198 form a helical membrane-spanning segment; sequence GAMLLTASIAVCANLLMAFVL. The Cytoplasmic portion of the chain corresponds to 199–235; that stretch reads HQAGPPHSHGSRGAEYAPLEEGPEEPLPLGNTSVRAA. Residues 236–256 traverse the membrane as a helical segment; the sequence is FVHVLGDLLQSFGVLAASILI. 2 residues coordinate Zn(2+): histidine 238 and aspartate 242. The Lumenal portion of the chain corresponds to 257–264; it reads YFKPQYKA. The chain crosses the membrane as a helical span at residues 265-285; the sequence is ADPISTFLFSICALGSTAPTL. The Cytoplasmic portion of the chain corresponds to 286–388; the sequence is RDVLRILMEG…CLRCQEPPQA (103 aa). A Dityrosine (Tyr-Tyr) (interchain with Y-372) cross-link involves residue tyrosine 357. A Dityrosine (Tyr-Tyr) (interchain with Y-357) cross-link involves residue tyrosine 372.

This sequence belongs to the cation diffusion facilitator (CDF) transporter (TC 2.A.4) family. SLC30A subfamily. In terms of assembly, homodimer; dityrosine-linked. Homodimerization seems specific of the human protein and enhances the zinc transport efficiency. Interacts with TMEM163. Homodimerization through dityrosine bonds is stimulated by oxidative stress.

It is found in the cytoplasmic vesicle. It localises to the secretory vesicle. The protein resides in the synaptic vesicle membrane. The protein localises to the synapse. Its subcellular location is the synaptosome. It is found in the late endosome membrane. It localises to the lysosome membrane. The enzyme catalyses Zn(2+)(in) + 2 H(+)(out) = Zn(2+)(out) + 2 H(+)(in). Its function is as follows. Probable proton-coupled zinc ion antiporter mediating the import of zinc from cytoplasm into synaptic vesicles and participating to cellular zinc ion homeostasis in the brain. This is Probable proton-coupled zinc antiporter SLC30A3 from Homo sapiens (Human).